A 167-amino-acid chain; its full sequence is Nucleoside diphosphate kinase (167 aa).

Residues Lys11, Arg92, Thr98, Arg109, and Asn129 each contribute to the ATP site. His132 serves as the catalytic Pros-phosphohistidine intermediate.

It belongs to the NDK family. Homotetramer. The cofactor is Mg(2+).

It localises to the cytoplasm. The catalysed reaction is a 2'-deoxyribonucleoside 5'-diphosphate + ATP = a 2'-deoxyribonucleoside 5'-triphosphate + ADP. It carries out the reaction a ribonucleoside 5'-diphosphate + ATP = a ribonucleoside 5'-triphosphate + ADP. Functionally, major role in the synthesis of nucleoside triphosphates other than ATP. The ATP gamma phosphate is transferred to the NDP beta phosphate via a ping-pong mechanism, using a phosphorylated active-site intermediate. This Borreliella burgdorferi (strain ATCC 35210 / DSM 4680 / CIP 102532 / B31) (Borrelia burgdorferi) protein is Nucleoside diphosphate kinase (ndk).